We begin with the raw amino-acid sequence, 492 residues long: MLGSGLLLLAILAFLSVMVLVSVWQQKIRGKLPPGPIPLPFIGNYLQLNRKDVYSSITQLQEHYGPVFTIHLGPRRVVVLYGYDAVKEALVDHAEEFSGRGEQATFNTLFKGYGVAFSNGERAKQLRRFSIATLRDFGMGKRGVEERIQEEAGCLIKMLQGTCGAPIDPTIYLSKTASNVISSIVFGDRFNYEDKEFLSLLQMMGQVNKFAASPTGQLYDMFHSVMKYLPGPQQQIIKDSHKLEDFMIQKVKQNQSTLDPNSPRDFIDSFLIHMQKEKYVNSEFHMKNLVMTSLNLFFAGSETVSSTLRYGFLLLMKHPDVEAKVHEEIDRVIGRNRQPQYEDHMKMPYTQAVINEIQRFSNFAPLGIPRRITKDTSFRGFFLPKGTEVFPILGSLMTDPKFFSSPKDFNPQHFLDDKGQLKKIPAFLPFSTGKRFCLGDSLAKMELFLFFTTILQNFRFKFPRKLEDINESPTPEGFTRIIPKYTMSFVPI.

Cysteine 437 is a heme binding site.

The protein belongs to the cytochrome P450 family. Requires heme as cofactor. In terms of tissue distribution, liver.

The protein resides in the endoplasmic reticulum membrane. It is found in the microsome membrane. The enzyme catalyses an organic molecule + reduced [NADPH--hemoprotein reductase] + O2 = an alcohol + oxidized [NADPH--hemoprotein reductase] + H2O + H(+). Highly active in the 7-alpha-hydroxylation of testosterone. The protein is Cytochrome P450 2A12 (Cyp2a12) of Mus musculus (Mouse).